The following is a 145-amino-acid chain: Large ribosomal subunit protein uL16 (145 aa).

The protein belongs to the universal ribosomal protein uL16 family. Part of the 50S ribosomal subunit.

Functionally, binds 23S rRNA and is also seen to make contacts with the A and possibly P site tRNAs. This is Large ribosomal subunit protein uL16 from Lachnospira eligens (strain ATCC 27750 / DSM 3376 / VPI C15-48 / C15-B4) (Eubacterium eligens).